The sequence spans 284 residues: MTIVNLAAYHFVSIDATEQWRPLVTARCNELGLRGTILLAPEGINLFIAGPREATDAFIDYIRHDPLFEGKFATLQFKESLSDSQPFRRMLVRLKREIITMKKPAIKPELGRAPSVDARTLKAWLDRGHDDAGRPVVMLDTRNAFEVDVGTFDGALDYRIDKFSEFPEVIDANRADLEGRTVVSFCTGGIRCEKAAIHMKEIGIDNVYQLEGGILKYFEEVGGAHYHGDCFVFDYRTALNPQLQPTENVTCFACRAVVTPEAQQSPSYVPGKSCPACAQAASAA.

The region spanning Ala-132–Tyr-226 is the Rhodanese domain. Cys-186 functions as the Cysteine persulfide intermediate in the catalytic mechanism.

This sequence belongs to the TrhO family.

The catalysed reaction is uridine(34) in tRNA + AH2 + O2 = 5-hydroxyuridine(34) in tRNA + A + H2O. Its function is as follows. Catalyzes oxygen-dependent 5-hydroxyuridine (ho5U) modification at position 34 in tRNAs. In Burkholderia ambifaria (strain MC40-6), this protein is tRNA uridine(34) hydroxylase.